Here is a 442-residue protein sequence, read N- to C-terminus: Proline--tRNA ligase (442 aa).

It belongs to the class-II aminoacyl-tRNA synthetase family. ProS type 2 subfamily. As to quaternary structure, homodimer.

The protein resides in the cytoplasm. The catalysed reaction is tRNA(Pro) + L-proline + ATP = L-prolyl-tRNA(Pro) + AMP + diphosphate. Catalyzes the attachment of proline to tRNA(Pro) in a two-step reaction: proline is first activated by ATP to form Pro-AMP and then transferred to the acceptor end of tRNA(Pro). The protein is Proline--tRNA ligase of Rhizobium meliloti (strain 1021) (Ensifer meliloti).